The following is a 203-amino-acid chain: Galactoside O-acetyltransferase (203 aa).

D17, S71, N85, and D93 together coordinate substrate. Acetyl-CoA is bound at residue N85. The active-site Proton donor/acceptor is the H115. Residues S142, A160, 165-166 (TK), R180, and R183 contribute to the acetyl-CoA site.

It belongs to the transferase hexapeptide repeat family. As to quaternary structure, homotrimer. Post-translationally, the N-terminus of this protein is heterogeneous because the initiator methionine is only partially cleaved.

It is found in the cytoplasm. The catalysed reaction is a beta-D-galactoside + acetyl-CoA = a 6-acetyl-beta-D-galactoside + CoA. Catalyzes the CoA-dependent transfer of an acetyl group to the 6-O-methyl position of a range of galactosides, glucosides, and lactosides. May assist cellular detoxification by acetylating non-metabolizable pyranosides, thereby preventing their reentry into the cell. This chain is Galactoside O-acetyltransferase (lacA), found in Escherichia coli (strain K12).